The sequence spans 1059 residues: Kinesin-like protein KIN-7K, chloroplastic (1059 aa).

Low complexity-rich tracts occupy residues Met1–Ser35 and Pro43–Phe58. The transit peptide at Met1–Thr48 directs the protein to the chloroplast. Residues Met1–Ser99 form a disordered region. Positions Phe59–Ser69 are enriched in gly residues. Low complexity predominate over residues Arg70 to Pro87. Pro residues predominate over residues Val88–Phe97. One can recognise a Kinesin motor domain in the interval Ser114–Val431. An ATP-binding site is contributed by Gly194–Thr201. A coiled-coil region spans residues Ala435 to Val518. The disordered stretch occupies residues Ala526–Pro570. Residues Ser546–Ser569 show a composition bias toward polar residues. 3 coiled-coil regions span residues Glu640 to Ser674, Glu700 to Arg781, and Leu862 to Asp910. The segment at Cys1013–Arg1048 adopts an RING-type zinc-finger fold.

This sequence belongs to the TRAFAC class myosin-kinesin ATPase superfamily. Kinesin family. KIN-7 subfamily.

It localises to the plastid. The protein localises to the chloroplast. The sequence is that of Kinesin-like protein KIN-7K, chloroplastic from Oryza sativa subsp. japonica (Rice).